We begin with the raw amino-acid sequence, 493 residues long: NAD(P)H dehydrogenase (quinone) (493 aa).

FAD-binding positions include 12 to 13 (PA), 35 to 37 (DCD), 42 to 43 (AA), K52, G117, D317, 324 to 325 (LA), and Y450.

This sequence belongs to the class-I pyridine nucleotide-disulfide oxidoreductase family. As to quaternary structure, homotetramer. It depends on FAD as a cofactor.

It catalyses the reaction a quinone + NADH + H(+) = a quinol + NAD(+). The enzyme catalyses a quinone + NADPH + H(+) = a quinol + NADP(+). Functionally, may contribute to virulence by increasing resistance to reactive oxygen intermediates. It can reduce 2,6-dimethyl-1,4-benzoquinone (DMBQ), 5-hydroxy-1,4-naphthaquinone (5-HNQ) and menadione. The protein is NAD(P)H dehydrogenase (quinone) (lpdA) of Mycobacterium tuberculosis (strain CDC 1551 / Oshkosh).